The primary structure comprises 275 residues: tRNA pseudouridine synthase A (275 aa).

The Nucleophile role is filled by Asp56. Residue Tyr114 participates in substrate binding.

The protein belongs to the tRNA pseudouridine synthase TruA family. In terms of assembly, homodimer.

The catalysed reaction is uridine(38/39/40) in tRNA = pseudouridine(38/39/40) in tRNA. Its function is as follows. Formation of pseudouridine at positions 38, 39 and 40 in the anticodon stem and loop of transfer RNAs. This chain is tRNA pseudouridine synthase A, found in Polynucleobacter asymbioticus (strain DSM 18221 / CIP 109841 / QLW-P1DMWA-1) (Polynucleobacter necessarius subsp. asymbioticus).